Reading from the N-terminus, the 241-residue chain is Uridylate kinase (241 aa).

An ATP-binding site is contributed by glycine 9–serine 10. Residue glycine 44 participates in UMP binding. Residues glycine 45 and arginine 49 each contribute to the ATP site. UMP-binding positions include aspartate 66 and valine 114–threonine 120. ATP-binding residues include threonine 140, tyrosine 146, and aspartate 149. The segment at threonine 222–alanine 241 is disordered.

Belongs to the UMP kinase family. In terms of assembly, homohexamer.

Its subcellular location is the cytoplasm. The catalysed reaction is UMP + ATP = UDP + ADP. Its pathway is pyrimidine metabolism; CTP biosynthesis via de novo pathway; UDP from UMP (UMPK route): step 1/1. Its activity is regulated as follows. Inhibited by UTP. Its function is as follows. Catalyzes the reversible phosphorylation of UMP to UDP. This is Uridylate kinase from Halorubrum lacusprofundi (strain ATCC 49239 / DSM 5036 / JCM 8891 / ACAM 34).